A 1534-amino-acid polypeptide reads, in one-letter code: Ribosome-binding protein 1 (1534 aa).

Residues 1–7 (MDIYDTQ) lie on the Lumenal side of the membrane. A helical membrane pass occupies residues 8–28 (TLGVMVFGGFMVVSAIGIFLV). Topologically, residues 29–1534 (STFSMKETSY…DSSSKEGTSV (1506 aa)) are cytoplasmic. Disordered stretches follow at residues 45–91 (QRKE…PAPN) and 125–152 (PAMPQEKLAPSPKDKKKKEKKVAKVEPA). A compositionally biased stretch (basic residues) spans 52 to 63 (THHQKVEKKKKE). Basic and acidic residues predominate over residues 64–88 (KTVEKKGKTKKKEEKPNGKIPDHEP). The segment covering 125-135 (PAMPQEKLAPS) has biased composition (low complexity). Lysine 148 is covalently cross-linked (Glycyl lysine isopeptide (Lys-Gly) (interchain with G-Cter in SUMO2)). Phosphoserine occurs at positions 159 and 165. 3 disordered regions span residues 173 to 780 (APKE…PLYL), 968 to 987 (KELVEKSEAARQEEQQRKAL), and 1021 to 1082 (RELC…RAEN). The segment covering 175 to 194 (KEVPMVVVPPVGAKAGTPAT) has biased composition (low complexity). Tandem repeats lie at residues 197–206 (AQGKKAEGAQ), 207–216 (NQSRKAEGAP), 217–226 (NQGKKAEGAL), 227–236 (NQGKKAEGAQ), 237–246 (NQGKKVEVAP), 247–256 (NQGKKAEGGQ), 257–266 (NQGKKVEGAQ), 267–276 (NQGKKAEGTP), 277–286 (NQGKKAEGAP), 287–296 (NQGKKTDGAP), 297–306 (NQGKKSEGAP), 307–316 (NQGKKAEGAQ), 317–326 (NQGKKVEVAP), 327–336 (NQGKKAEGGQ), 337–346 (NQGKKVEGAQ), 347–356 (NQGKKAEGTP), 357–366 (NQGKKAEGAP), 367–376 (NQGKKTDGAP), 377–386 (NQGKKSEGAP), 387–396 (NQGKKVEGAQ), 397–406 (NQGKKVEGVQ), 407–416 (NQGKKAEGAQ), 417–426 (NQGKKAEGTS), 427–436 (SQGRKEEGTP), 437–446 (NLGKKAEGSP), 447–456 (NQGKKVEVVQ), 457–466 (NQSKKVEGAP), 467–476 (NQGKKAEGSQ), 477–486 (NQGKKTEGAS), 487–496 (NQGKKVDGAQ), 497–506 (NQGKKAEGAP), 507–516 (NQGKKVEGAQ), 517–526 (NQGKKAEGTP), 527–536 (NQGKKAEGAQ), 537–546 (NQGKKAEGAP), 547–556 (NQGKKAEGAP), 557–566 (NQGKKAEGAP), 567–576 (NQGKKAEGAP), 577–586 (NQGKKAEAAP), 587–596 (NQGKKAEGAP), 597–606 (NQGKKAEGAP), 607–616 (NQGKKAEAAP), 617–626 (NQGKKAEGAP), 627–636 (NQGKKAEGAP), 637–646 (NQGKKAEGAP), 647–656 (NQGKKAEGAQ), 657–666 (NQGKKAEGAP), 667–676 (NQGKKADLVA), 677–686 (NQGTKAEGVA), 687–696 (GQGKKAEGAP), 697–706 (NQGKKGEGTP), 707–716 (NQGKKSEGSP), 717–726 (NQGKKVDASA), and 727–736 (NQSKRAESAP). The segment at 197-736 (AQGKKAEGAQ…NQSKRAESAP (540 aa)) is 54 X 10 AA tandem repeats of [NASG]-[QL]-[GS]-[KRT]-[KR]-[AVTSEG]-[ED]-[AGVLS]-[ATGSV]-[PQLSA]. Residue threonine 275 is modified to Phosphothreonine. Positions 395-428 (AQNQGKKVEGVQNQGKKAEGAQNQGKKAEGTSSQ) are enriched in polar residues. The segment covering 474 to 499 (GSQNQGKKTEGASNQGKKVDGAQNQG) has biased composition (polar residues). Polar residues predominate over residues 705-718 (TPNQGKKSEGSPNQ). Position 715 is a phosphoserine (serine 715). Serine 747 carries the post-translational modification Phosphoserine. Lysine 752 is covalently cross-linked (Glycyl lysine isopeptide (Lys-Gly) (interchain with G-Cter in SUMO1)). Serine 1032 carries the post-translational modification Phosphoserine. Residues 1059–1080 (AEVKSKSEELSGLHGQLKEARA) are compositionally biased toward basic and acidic residues. Lysine 1064 is modified (N6-acetyllysine). Phosphoserine is present on residues serine 1091 and serine 1110. Disordered regions lie at residues 1224–1251 (ELLKQRPADTDPSSDLASKLREAEETQN), 1391–1416 (KSHVEDGDVAGSPAAPPAEQDPVELK), and 1509–1534 (ERDTVKKLQEQLDKTDDSSSKEGTSV). Residues 1509–1528 (ERDTVKKLQEQLDKTDDSSS) are compositionally biased toward basic and acidic residues.

It localises to the endoplasmic reticulum membrane. Functionally, acts as a ribosome receptor and mediates interaction between the ribosome and the endoplasmic reticulum membrane. The protein is Ribosome-binding protein 1 (RRBP1) of Canis lupus familiaris (Dog).